The sequence spans 1281 residues: Angiotensin-converting enzyme (1281 aa).

The first 17 residues, 1-17, serve as a signal peptide directing secretion; the sequence is MPAALGLLLPWLSLVGA. Residues 18–1241 are Extracellular-facing; sequence LQPGLEPPQS…MSVGTKQATA (1224 aa). 2 Peptidase M2 domains span residues 28–610 and 629–1208; these read DPTE…LGWP and IVDE…LGWP. Asn42, Asn62, Asn80, Asn99, and Asn148 each carry an N-linked (GlcNAc...) asparagine glycan. A disulfide bridge connects residues Cys145 and Cys151. A chloride-binding site is contributed by Tyr217. Residue Asn304 is glycosylated (N-linked (GlcNAc...) asparagine). Cys345 and Cys363 are disulfide-bonded. His376 contacts Zn(2+). The active-site Proton acceptor 1 is Glu377. His380 and Glu404 together coordinate Zn(2+). Asn495 is a glycosylation site (N-linked (GlcNAc...) asparagine). His506 serves as the catalytic Proton donor 1. Chloride is bound at residue Arg515. A disulfide bridge links Cys531 with Cys543. Residues Asn535, Asn573, Asn601, Asn643, Asn663, and Asn746 are each glycosylated (N-linked (GlcNAc...) asparagine). Cys743 and Cys749 are joined by a disulfide. 2 residues coordinate chloride: Arg777 and Tyr815. An intrachain disulfide couples Cys943 to Cys961. His974 serves as a coordination point for Zn(2+). Glu975 (proton acceptor 2) is an active-site residue. Residues His978 and Glu1002 each coordinate Zn(2+). The chloride site is built by Trp1076 and Arg1080. The Proton donor 2 role is filled by His1104. Arg1113 lines the chloride pocket. Cys1129 and Cys1141 are oxidised to a cystine. The N-linked (GlcNAc...) asparagine glycan is linked to Asn1177. Residues 1201–1240 are juxtamembrane stalk; the sequence is NGEVLGWPEYSWTPYAVTEFHAATDTADFLGMSVGTKQAT. The chain crosses the membrane as a helical span at residues 1242–1262; it reads GAWVLLALALVFLITSIFLGV. The Cytoplasmic segment spans residues 1263–1281; the sequence is KLFSSRRKAFKSSSEMELK.

It belongs to the peptidase M2 family. Zn(2+) serves as cofactor. Requires chloride as cofactor.

The protein localises to the cell membrane. It localises to the cytoplasm. The enzyme catalyses Release of a C-terminal dipeptide, oligopeptide-|-Xaa-Yaa, when Xaa is not Pro, and Yaa is neither Asp nor Glu. Thus, conversion of angiotensin I to angiotensin II, with increase in vasoconstrictor activity, but no action on angiotensin II.. The catalysed reaction is angiotensin I + H2O = L-histidyl-L-leucine + angiotensin II. It catalyses the reaction bradykinin + H2O = L-Phe-L-Arg + bradykinin(1-7). It carries out the reaction substance P + H2O = substance P(1-9) + L-Leu-L-Met-NH2. The enzyme catalyses substance P + H2O = substance P(1-8) + Gly-L-Leu-L-Met-NH2. The catalysed reaction is substance P + H2O = L-Phe-L-Phe-Gly-L-Leu-L-Met-NH2 + substance P(1-6). It catalyses the reaction neurotensin + H2O = neurotensin(1-11) + L-isoleucyl-L-leucine. It carries out the reaction goralatide + H2O = N-acetyl-L-seryl-L-aspartate + L-lysyl-L-proline. The enzyme catalyses Met-enkephalin + H2O = L-phenylalanyl-L-methionine + L-tyrosylglycylglycine. The catalysed reaction is Leu-enkephalin + H2O = L-tyrosylglycylglycine + L-phenylalanyl-L-leucine. It catalyses the reaction Met-enkephalin-Arg-Phe + H2O = L-arginyl-L-phenylalanine + Met-enkephalin. Its function is as follows. Dipeptidyl carboxypeptidase that removes dipeptides from the C-terminus of a variety of circulating hormones, such as angiotensin I, bradykinin or enkephalins, thereby playing a key role in the regulation of blood pressure, electrolyte homeostasis or synaptic plasticity. Composed of two similar catalytic domains, each possessing a functional active site, with different selectivity for substrates. Plays a major role in the angiotensin-renin system that regulates blood pressure and sodium retention by the kidney by converting angiotensin I to angiotensin II, resulting in an increase of the vasoconstrictor activity of angiotensin. Also able to inactivate bradykinin, a potent vasodilator, and therefore enhance the blood pressure response. Acts as a regulator of synaptic transmission by mediating cleavage of neuropeptide hormones, such as substance P, neurotensin or enkephalins. Catalyzes degradation of different enkephalin neuropeptides (Met-enkephalin, Leu-enkephalin, Met-enkephalin-Arg-Phe and possibly Met-enkephalin-Arg-Gly-Leu). Also acts as a regulator of hematopoietic stem cell differentiation by mediating degradation of hemoregulatory peptide N-acetyl-SDKP (AcSDKP). This is Angiotensin-converting enzyme from Gallus gallus (Chicken).